A 447-amino-acid chain; its full sequence is Cysteine--tRNA ligase (447 aa).

Residue cysteine 28 coordinates Zn(2+). The short motif at 30–40 (PTVYNYIHIGN) is the 'HIGH' region element. Residues cysteine 211, histidine 236, and glutamate 240 each coordinate Zn(2+). The short motif at 268–272 (KMSKS) is the 'KMSKS' region element. Lysine 271 is an ATP binding site.

Belongs to the class-I aminoacyl-tRNA synthetase family. In terms of assembly, monomer. Zn(2+) serves as cofactor.

The protein resides in the cytoplasm. It carries out the reaction tRNA(Cys) + L-cysteine + ATP = L-cysteinyl-tRNA(Cys) + AMP + diphosphate. This is Cysteine--tRNA ligase from Streptococcus agalactiae serotype III (strain NEM316).